The primary structure comprises 474 residues: Probable CAAX prenyl protease 1 (474 aa).

3 helical membrane passes run 103–123, 196–216, and 230–250; these read SWFS…IIKY, IFVI…SVVV, and FIMY…TIAP. Residue H332 participates in Zn(2+) binding. E333 is a catalytic residue. Position 336 (H336) interacts with Zn(2+). A run of 2 helical transmembrane segments spans residues 344 to 364 and 381 to 401; these read INTI…AAFI and VIVG…ILTF. Position 411 (E411) interacts with Zn(2+). D415 functions as the Proton donor in the catalytic mechanism.

It belongs to the peptidase M48A family. It depends on Zn(2+) as a cofactor.

The protein resides in the endoplasmic reticulum membrane. The catalysed reaction is Hydrolyzes the peptide bond -P2-(S-farnesyl or geranylgeranyl)C-P1'-P2'-P3'-COOH where P1' and P2' are amino acids with aliphatic side chains and P3' is any C-terminal residue.. Functionally, proteolytically removes the C-terminal three residues of farnesylated proteins. In Schizosaccharomyces pombe (strain 972 / ATCC 24843) (Fission yeast), this protein is Probable CAAX prenyl protease 1.